Here is an 82-residue protein sequence, read N- to C-terminus: Defensin-like protein 22 (82 aa).

Residues 1–24 form the signal peptide; the sequence is MAGLKVFSFALLLILTFSLIDVEG. 4 disulfides stabilise this stretch: C34-C82, C44-C69, C53-C78, and C57-C80.

This sequence belongs to the DEFL family.

The protein localises to the secreted. The chain is Defensin-like protein 22 from Arabidopsis thaliana (Mouse-ear cress).